The chain runs to 405 residues: 8-amino-7-oxononanoate synthase 1 (405 aa).

Arginine 29 provides a ligand contact to substrate. Residue 116-117 (GY) coordinates pyridoxal 5'-phosphate. Position 141 (histidine 141) interacts with substrate. Pyridoxal 5'-phosphate is bound by residues serine 187, histidine 215, and threonine 247. The residue at position 250 (lysine 250) is an N6-(pyridoxal phosphate)lysine. Substrate is bound at residue threonine 368.

The protein belongs to the class-II pyridoxal-phosphate-dependent aminotransferase family. BioF subfamily. In terms of assembly, homodimer. Requires pyridoxal 5'-phosphate as cofactor.

It carries out the reaction 6-carboxyhexanoyl-[ACP] + L-alanine + H(+) = (8S)-8-amino-7-oxononanoate + holo-[ACP] + CO2. It functions in the pathway cofactor biosynthesis; biotin biosynthesis. Functionally, catalyzes the decarboxylative condensation of pimeloyl-[acyl-carrier protein] and L-alanine to produce 8-amino-7-oxononanoate (AON), [acyl-carrier protein], and carbon dioxide. The chain is 8-amino-7-oxononanoate synthase 1 from Polaromonas sp. (strain JS666 / ATCC BAA-500).